Reading from the N-terminus, the 486-residue chain is 6-phosphogluconate dehydrogenase, decarboxylating 2 (486 aa).

NADP(+) is bound by residues 12–17 (GLAVMG), 35–37 (NRT), 79–81 (VKA), and asparagine 107. Substrate is bound by residues asparagine 107 and 133 to 135 (SGG). The active-site Proton acceptor is the lysine 188. Position 191–192 (191–192 (HN)) interacts with substrate. Glutamate 195 (proton donor) is an active-site residue. 5 residues coordinate substrate: tyrosine 196, lysine 266, arginine 293, arginine 456, and histidine 462. The Microbody targeting signal signature appears at 484-486 (SKI).

It belongs to the 6-phosphogluconate dehydrogenase family. As to quaternary structure, forms homodimer. Forms heterodimers with PGD1 or PGD3.

Its subcellular location is the cytoplasm. It is found in the cytosol. It localises to the peroxisome. The enzyme catalyses 6-phospho-D-gluconate + NADP(+) = D-ribulose 5-phosphate + CO2 + NADPH. Its pathway is carbohydrate degradation; pentose phosphate pathway; D-ribulose 5-phosphate from D-glucose 6-phosphate (oxidative stage): step 3/3. Its function is as follows. Catalyzes the oxidative decarboxylation of 6-phosphogluconate to ribulose 5-phosphate and CO(2), with concomitant reduction of NADP to NADPH. Required for guided growth of the male gametophytes and interaction between the pollen tube and the ovule. The sequence is that of 6-phosphogluconate dehydrogenase, decarboxylating 2 from Arabidopsis thaliana (Mouse-ear cress).